The primary structure comprises 265 residues: Putative 2-aminoethylphosphonate transport system permease protein PhnV (265 aa).

A run of 6 helical transmembrane segments spans residues 13 to 33 (GVVA…VILM), 69 to 89 (LTIG…AALA), 104 to 124 (VFYL…LVAF), 131 to 151 (MNGT…AFTF), 185 to 205 (LPLL…LSMG), and 233 to 253 (NIAD…LLMM). The ABC transmembrane type-1 domain maps to 65-253 (LLASLTIGFC…LVAITLLLMM (189 aa)).

It belongs to the binding-protein-dependent transport system permease family.

It localises to the cell inner membrane. Probably part of the PhnSTUV complex (TC 3.A.1.11.5) involved in 2-aminoethylphosphonate import. Probably responsible for the translocation of the substrate across the membrane. The polypeptide is Putative 2-aminoethylphosphonate transport system permease protein PhnV (phnV) (Salmonella typhimurium (strain LT2 / SGSC1412 / ATCC 700720)).